The following is a 76-amino-acid chain: Probable insulin-like peptide alpha-type 3 (76 aa).

Residues 1 to 18 form the signal peptide; that stretch reads MFVLLIILSIILAQVTDA. Disulfide bonds link Cys-28–Cys-58, Cys-40–Cys-71, and Cys-46–Cys-72.

This sequence belongs to the insulin family.

The protein resides in the secreted. This is Probable insulin-like peptide alpha-type 3 (ins-23) from Caenorhabditis elegans.